The chain runs to 635 residues: Peptidyl-prolyl cis-trans isomerase PASTICCINO1 (635 aa).

Polar residues predominate over residues 1–10 (MAVGDQTEQN). The interval 1 to 28 (MAVGDQTEQNYLPKKKKSETEDDKRRKK) is disordered. 3 PPIase FKBP-type domains span residues 51 to 147 (GDQV…LDFS), 175 to 260 (PYEV…VHFI), and 291 to 383 (DSRL…LGFE). TPR repeat units lie at residues 400–433 (ADKI…FNHV), 449–482 (NMLH…KPGH), and 483–516 (VKGL…DKSS). A calmodulin-binding region spans residues 530–546 (KEQEAESKARKQFKGLF). Over residues 569–586 (EVDETKDNDDDETLEEEG) the composition is skewed to acidic residues. The interval 569-593 (EVDETKDNDDDETLEEEGATTVSTE) is disordered. A helical; Anchor for type IV membrane protein membrane pass occupies residues 609–629 (VMLQIGIQLGVVLIGILIFQF).

This sequence belongs to the FKBP-type PPIase family. Interacts with calmodulin (CaM). Interacts with RPM1 and NAC089. Interacts with the elongase complex core members KCR1, PAS2 and CER10. In terms of tissue distribution, expressed ubiquitously.

Its subcellular location is the endoplasmic reticulum membrane. It is found in the cytoplasm. The protein resides in the nucleus. The catalysed reaction is [protein]-peptidylproline (omega=180) = [protein]-peptidylproline (omega=0). Functionally, PPIases accelerate the folding of proteins. It catalyzes the cis-trans isomerization of proline imidic peptide bonds in oligopeptides. Essential protein regulating cell division, adhesion and elongation throughout the plant development and embryogenesis. Required for the spatial organization of apical meristems. Involved in the hormonal control of cell division and differentiation mediated by cytokinins and auxin. Regulates the function of NAC089 transcription factor by controlling its targeting to the nucleus upon plant cell division. Interacts with enzymes of the fatty acid elongase complex and favors the generation of very-long-chain fatty acids (VLCFAs) required for polar auxin transport and tissue patterning during plant development. The protein is Peptidyl-prolyl cis-trans isomerase PASTICCINO1 (PAS1) of Arabidopsis thaliana (Mouse-ear cress).